Here is a 103-residue protein sequence, read N- to C-terminus: Small ribosomal subunit protein uS10 (103 aa).

Belongs to the universal ribosomal protein uS10 family. Part of the 30S ribosomal subunit.

Functionally, involved in the binding of tRNA to the ribosomes. The polypeptide is Small ribosomal subunit protein uS10 (Neisseria gonorrhoeae (strain ATCC 700825 / FA 1090)).